Here is a 250-residue protein sequence, read N- to C-terminus: 3-deoxy-manno-octulosonate cytidylyltransferase (250 aa).

The protein belongs to the KdsB family.

It localises to the cytoplasm. The enzyme catalyses 3-deoxy-alpha-D-manno-oct-2-ulosonate + CTP = CMP-3-deoxy-beta-D-manno-octulosonate + diphosphate. It functions in the pathway nucleotide-sugar biosynthesis; CMP-3-deoxy-D-manno-octulosonate biosynthesis; CMP-3-deoxy-D-manno-octulosonate from 3-deoxy-D-manno-octulosonate and CTP: step 1/1. It participates in bacterial outer membrane biogenesis; lipopolysaccharide biosynthesis. Its function is as follows. Activates KDO (a required 8-carbon sugar) for incorporation into bacterial lipopolysaccharide in Gram-negative bacteria. The chain is 3-deoxy-manno-octulosonate cytidylyltransferase from Xanthomonas campestris pv. campestris (strain 8004).